Reading from the N-terminus, the 554-residue chain is Hydroxylamine reductase (554 aa).

[2Fe-2S] cluster is bound by residues Cys-3, Cys-6, Cys-18, and Cys-25. Hybrid [4Fe-2O-2S] cluster contacts are provided by His-252, Glu-276, Cys-320, Cys-408, Cys-436, Cys-461, Glu-495, and Lys-497. Cys-408 carries the cysteine persulfide modification.

Belongs to the HCP family. Requires [2Fe-2S] cluster as cofactor. The cofactor is hybrid [4Fe-2O-2S] cluster.

The protein localises to the cytoplasm. The catalysed reaction is A + NH4(+) + H2O = hydroxylamine + AH2 + H(+). Catalyzes the reduction of hydroxylamine to form NH(3) and H(2)O. The protein is Hydroxylamine reductase of Photobacterium profundum (strain SS9).